Consider the following 429-residue polypeptide: MAQAPADPGREGHLEQRILQVLTEAGSPVKLAQLVKECQAPKRELNQVLYRMKKELKVSLTSPATWCLGGTDPEGEGPAELALSSPAERPQQHAATIPETPGPQFSQQREEDIYRFLKDNGPQRALVIAQALGMRTAKDVNRDLYRMKSRHLLDMDEQSKAWTIYRPEDSGRRAKSASIIYQHNPINMICQNGPNSWISIANSEAIQIGHGNIITRQTVSREDGSAGPRHLPSMAPGDSSTWGTLVDPWGPQDIHMEQSILRRVQLGHSNEMRLHGVPSEGPAHIPPGSPPVSATAAGPEASFEARIPSPGTHPEGEAAQRIHMKSCFLEDATIGNSNKMSISPGVAGPGGVAGSGEGEPGEDAGRRPADTQSRSHFPRDIGQPITPSHSKLTPKLETMTLGNRSHKAAEGSHYVDEASHEGSWWGGGI.

Z-binding domains are found at residues 8–70 (PGRE…CLGG) and 103–166 (PQFS…TIYR). Residues 68–107 (LGGTDPEGEGPAELALSSPAERPQQHAATIPETPGPQFSQ) are disordered. Short sequence motifs (RIP homotypic interaction motif (RHIM)) lie at residues 195 to 219 (NSWI…RQTV) and 253 to 277 (DIHM…LHGV). Disordered regions lie at residues 277-299 (VPSE…AAGP) and 339-429 (KMSI…GGGI). Over residues 347-358 (AGPGGVAGSGEG) the composition is skewed to gly residues. Positions 407-420 (KAAEGSHYVDEASH) are enriched in basic and acidic residues.

Homodimer. Interacts (via RIP homotypic interaction motif) with RIPK3; leading to RIPK3 activation and necroptosis; interaction is enhanced by CASP6. Interacts (via RIP homotypic interaction motif) with RIPK1. Component of the AIM2 PANoptosome complex, a multiprotein complex that drives inflammatory cell death (PANoptosis). In terms of assembly, (Microbial infection) Interacts (via RIP homotypic interaction motif/RHIM) with herpes simplex virus 1/HHV-1 protein RIR1/ICP6 (via RHIM); this interaction may induce heteromeric amyloid assemblies and prevent necroptosis activation. Interacts with human herpes simplex virus 1/HHV-1 protein ICP0. Post-translationally, phosphorylated. Highly expressed in lymphatic tissues including lymph node, leukocytes, tonsil, bone marrow and spleen. Expressed to a lesser extent in thymus, lung and liver.

The protein resides in the cytoplasm. It is found in the nucleus. ZBP1-dependent necroptosis is normally inhibited by RIPK1: RIPK1 inhibits the ZBP1-induced activation of RIPK3 via FADD-mediated recruitment of CASP8, which cleaves RIPK1 and limits TNF-induced necroptosis. Its function is as follows. Key innate sensor that recognizes and binds Z-RNA structures, which are produced by a number of viruses, such as herpesvirus, orthomyxovirus or flavivirus, and triggers different forms of cell death. ZBP1 acts as an essential mediator of pyroptosis, necroptosis and apoptosis (PANoptosis), an integral part of host defense against pathogens, by activating RIPK3, caspase-8 (CASP8), and the NLRP3 inflammasome. Key activator of necroptosis, a programmed cell death process in response to death-inducing TNF-alpha family members, via its ability to bind Z-RNA: once activated upon Z-RNA-binding, ZBP1 interacts and stimulates RIPK3 kinase, which phosphorylates and activates MLKL, triggering execution of programmed necrosis. In addition to TNF-induced necroptosis, necroptosis can also take place in the nucleus in response to orthomyxoviruses infection: ZBP1 recognizes and binds Z-RNA structures that are produced in infected nuclei by orthomyxoviruses, such as the influenza A virus (IAV), leading to ZBP1 activation, RIPK3 stimulation and subsequent MLKL phosphorylation, triggering disruption of the nuclear envelope and leakage of cellular DNA into the cytosol. ZBP1-dependent cell death in response to IAV infection promotes interleukin-1 alpha (IL1A) induction in an NLRP3-inflammasome-independent manner: IL1A expression is required for the optimal interleukin-1 beta (IL1B) production, and together, these cytokines promote infiltration of inflammatory neutrophils to the lung, leading to the formation of neutrophil extracellular traps. In addition to its direct role in driving necroptosis via its ability to sense Z-RNAs, also involved in PANoptosis triggered in response to bacterial infection: component of the AIM2 PANoptosome complex, a multiprotein complex that triggers PANoptosis. Also acts as the apical sensor of fungal infection responsible for activating PANoptosis. Involved in CASP8-mediated cell death via its interaction with RIPK1 but independently of its ability to sense Z-RNAs. In some cell types, also able to restrict viral replication by promoting cell death-independent responses. In response to Zika virus infection in neurons, promotes a cell death-independent pathway that restricts viral replication: together with RIPK3, promotes a death-independent transcriptional program that modifies the cellular metabolism via up-regulation expression of the enzyme ACOD1/IRG1 and production of the metabolite itaconate. Itaconate inhibits the activity of succinate dehydrogenase, generating a metabolic state in neurons that suppresses replication of viral genomes. Functionally, (Microbial infection) In case of herpes simplex virus 1/HHV-1 infection, forms hetero-amyloid structures with HHV-1 protein RIR1/ICP6 which may inhibit ZBP1-mediated necroptosis, thereby preventing host cell death pathway and allowing viral evasion. This Homo sapiens (Human) protein is Z-DNA-binding protein 1.